The primary structure comprises 239 residues: MSEAAELPPVPEQARDVFGDRYADAVRYAELLAEAGVKRGLIGPREVPRLWERHLLNCAVLSEVVPEGVTVCDVGSGAGLPGIPLALVREDLKITLLEPLLRRTNFLTEVVELLGLDHVTVVRGRAEEVMGKLPPVHVVTARAVAPLDRLATWGIPLLRPYGEMLALKGDTAEEELKAATAALSKLGAEQTSILHVGEGVVSPLSTVVRVEVGESPGGVRFAAKRAKAARTGRTRRRRG.

S-adenosyl-L-methionine contacts are provided by residues G75, L80, 126–127 (AE), and R142.

This sequence belongs to the methyltransferase superfamily. RNA methyltransferase RsmG family.

The protein resides in the cytoplasm. Functionally, specifically methylates the N7 position of guanine in position 518 of 16S rRNA. The sequence is that of Ribosomal RNA small subunit methyltransferase G from Streptomyces coelicolor (strain ATCC BAA-471 / A3(2) / M145).